The sequence spans 144 residues: Large ribosomal subunit protein uL16 (144 aa).

Belongs to the universal ribosomal protein uL16 family. Part of the 50S ribosomal subunit.

In terms of biological role, binds 23S rRNA and is also seen to make contacts with the A and possibly P site tRNAs. The chain is Large ribosomal subunit protein uL16 from Clostridium perfringens (strain ATCC 13124 / DSM 756 / JCM 1290 / NCIMB 6125 / NCTC 8237 / Type A).